The following is a 190-amino-acid chain: Putative 3-methyladenine DNA glycosylase (190 aa).

It belongs to the DNA glycosylase MPG family.

The polypeptide is Putative 3-methyladenine DNA glycosylase (Chlamydia abortus (strain DSM 27085 / S26/3) (Chlamydophila abortus)).